The following is a 195-amino-acid chain: MIIPTIIEKNVGYDIFSRLLKDRIIFVGGREGEVDTASATMIIAQLLYLDAEDSEREINLYINSPGGLVTAGLAIYDTMQFIKAPITTICMGQAMSFGAVLLAAGSKGKRYALPHARIMIHQPLIWGGGISGQVTDIEIESNELRKNKEHLLDILAHHTGQDKEKIRQDSERNYYMSAQEAKAYGLIDEVLDLKK.

The active-site Nucleophile is the Ser96. The active site involves His121.

This sequence belongs to the peptidase S14 family. As to quaternary structure, fourteen ClpP subunits assemble into 2 heptameric rings which stack back to back to give a disk-like structure with a central cavity, resembling the structure of eukaryotic proteasomes.

The protein resides in the cytoplasm. The enzyme catalyses Hydrolysis of proteins to small peptides in the presence of ATP and magnesium. alpha-casein is the usual test substrate. In the absence of ATP, only oligopeptides shorter than five residues are hydrolyzed (such as succinyl-Leu-Tyr-|-NHMec, and Leu-Tyr-Leu-|-Tyr-Trp, in which cleavage of the -Tyr-|-Leu- and -Tyr-|-Trp bonds also occurs).. Its function is as follows. Cleaves peptides in various proteins in a process that requires ATP hydrolysis. Has a chymotrypsin-like activity. Plays a major role in the degradation of misfolded proteins. This is ATP-dependent Clp protease proteolytic subunit from Elusimicrobium minutum (strain Pei191).